The following is a 713-amino-acid chain: BBSome complex assembly protein BBS10 (713 aa).

The protein belongs to the TCP-1 chaperonin family. Component of a complex composed at least of MKKS, BBS10, BBS12, TCP1, CCT2, CCT3, CCT4, CCT5 and CCT8.

Its subcellular location is the cell projection. It is found in the cilium. In terms of biological role, probable molecular chaperone that assists the folding of proteins upon ATP hydrolysis. Plays a role in the assembly of BBSome, a complex involved in ciliogenesis regulating transports vesicles to the cilia. Involved in adipogenic differentiation. This is BBSome complex assembly protein BBS10 (Bbs10) from Mus musculus (Mouse).